The primary structure comprises 327 residues: Aspartate--ammonia ligase (327 aa).

This sequence belongs to the class-II aminoacyl-tRNA synthetase family. AsnA subfamily.

It is found in the cytoplasm. It carries out the reaction L-aspartate + NH4(+) + ATP = L-asparagine + AMP + diphosphate + H(+). The protein operates within amino-acid biosynthesis; L-asparagine biosynthesis; L-asparagine from L-aspartate (ammonia route): step 1/1. The sequence is that of Aspartate--ammonia ligase from Bacillus mycoides (strain KBAB4) (Bacillus weihenstephanensis).